A 412-amino-acid chain; its full sequence is Maltoporin (412 aa).

Positions 1–22 are cleaved as a signal peptide; the sequence is MKKVSVIAAAVAATLAAGSAFA.

The protein belongs to the porin LamB (TC 1.B.3) family. In terms of assembly, homotrimer formed of three 18-stranded antiparallel beta-barrels, containing three independent channels.

Its subcellular location is the cell outer membrane. It carries out the reaction beta-maltose(in) = beta-maltose(out). Involved in the transport of maltose and maltodextrins. The polypeptide is Maltoporin (Vibrio cholerae serotype O1 (strain ATCC 39315 / El Tor Inaba N16961)).